The sequence spans 288 residues: Nucleotide-binding protein APP7_0339 (288 aa).

Residue 8 to 15 (GRSGSGKS) participates in ATP binding. 56 to 59 (DIRN) contributes to the GTP binding site.

This sequence belongs to the RapZ-like family.

Displays ATPase and GTPase activities. This Actinobacillus pleuropneumoniae serotype 7 (strain AP76) protein is Nucleotide-binding protein APP7_0339.